The sequence spans 344 residues: Dihydroorotate dehydrogenase (quinone) (344 aa).

FMN contacts are provided by residues 61 to 65 and Thr-85; that span reads AGLDK. Substrate is bound at residue Lys-65. 110-114 is a substrate binding site; the sequence is NRMGF. Positions 138 and 171 each coordinate FMN. Substrate is bound at residue Asn-171. Ser-174 (nucleophile) is an active-site residue. Position 176 (Asn-176) interacts with substrate. FMN is bound by residues Lys-216 and Thr-244. Position 245-246 (245-246) interacts with substrate; it reads NT. Residues Gly-267, Gly-296, and 317-318 contribute to the FMN site; that span reads YS.

The protein belongs to the dihydroorotate dehydrogenase family. Type 2 subfamily. Monomer. FMN is required as a cofactor.

The protein localises to the cell membrane. It carries out the reaction (S)-dihydroorotate + a quinone = orotate + a quinol. Its pathway is pyrimidine metabolism; UMP biosynthesis via de novo pathway; orotate from (S)-dihydroorotate (quinone route): step 1/1. In terms of biological role, catalyzes the conversion of dihydroorotate to orotate with quinone as electron acceptor. This chain is Dihydroorotate dehydrogenase (quinone), found in Psychrobacter arcticus (strain DSM 17307 / VKM B-2377 / 273-4).